The following is a 203-amino-acid chain: Proteasome subunit beta 2 (203 aa).

Positions 1 to 9 (MGEEVQIGA) are cleaved as a propeptide — removed in mature form; by autocatalysis. The active-site Nucleophile is Thr-10.

It belongs to the peptidase T1B family. As to quaternary structure, the 20S proteasome core is composed of 14 alpha and 14 beta subunits that assemble into four stacked heptameric rings, resulting in a barrel-shaped structure. The two inner rings, each composed of seven catalytic beta subunits, are sandwiched by two outer rings, each composed of seven alpha subunits. The catalytic chamber with the active sites is on the inside of the barrel. Has a gated structure, the ends of the cylinder being occluded by the N-termini of the alpha-subunits. Is capped at one or both ends by the proteasome regulatory ATPase, PAN.

The protein resides in the cytoplasm. The enzyme catalyses Cleavage of peptide bonds with very broad specificity.. Its activity is regulated as follows. The formation of the proteasomal ATPase PAN-20S proteasome complex, via the docking of the C-termini of PAN into the intersubunit pockets in the alpha-rings, triggers opening of the gate for substrate entry. Interconversion between the open-gate and close-gate conformations leads to a dynamic regulation of the 20S proteasome proteolysis activity. Functionally, component of the proteasome core, a large protease complex with broad specificity involved in protein degradation. In Pyrobaculum aerophilum (strain ATCC 51768 / DSM 7523 / JCM 9630 / CIP 104966 / NBRC 100827 / IM2), this protein is Proteasome subunit beta 2.